Consider the following 279-residue polypeptide: Large ribosomal subunit protein uL2 (279 aa).

Disordered regions lie at residues 29–49 (PVKQLTEGKSSSGGRNNNGRV) and 202–279 (NASI…KKKG). Low complexity predominate over residues 36–49 (GKSSSGGRNNNGRV). Residues 209–220 (GRSRWLGRRPHN) show a composition bias toward basic residues.

The protein belongs to the universal ribosomal protein uL2 family. As to quaternary structure, part of the 50S ribosomal subunit. Forms a bridge to the 30S subunit in the 70S ribosome.

One of the primary rRNA binding proteins. Required for association of the 30S and 50S subunits to form the 70S ribosome, for tRNA binding and peptide bond formation. It has been suggested to have peptidyltransferase activity; this is somewhat controversial. Makes several contacts with the 16S rRNA in the 70S ribosome. In Beijerinckia indica subsp. indica (strain ATCC 9039 / DSM 1715 / NCIMB 8712), this protein is Large ribosomal subunit protein uL2.